A 383-amino-acid chain; its full sequence is 1-deoxy-D-xylulose 5-phosphate reductoisomerase (383 aa).

Positions 10, 11, 12, 13, 36, 37, 38, and 122 each coordinate NADPH. K123 is a 1-deoxy-D-xylulose 5-phosphate binding site. E124 serves as a coordination point for NADPH. D148 contacts Mn(2+). Positions 149, 150, 174, and 197 each coordinate 1-deoxy-D-xylulose 5-phosphate. A Mn(2+)-binding site is contributed by E150. G203 is an NADPH binding site. 1-deoxy-D-xylulose 5-phosphate contacts are provided by S210, N215, K216, and E219. E219 serves as a coordination point for Mn(2+).

The protein belongs to the DXR family. It depends on Mg(2+) as a cofactor. Requires Mn(2+) as cofactor.

It carries out the reaction 2-C-methyl-D-erythritol 4-phosphate + NADP(+) = 1-deoxy-D-xylulose 5-phosphate + NADPH + H(+). It participates in isoprenoid biosynthesis; isopentenyl diphosphate biosynthesis via DXP pathway; isopentenyl diphosphate from 1-deoxy-D-xylulose 5-phosphate: step 1/6. In terms of biological role, catalyzes the NADPH-dependent rearrangement and reduction of 1-deoxy-D-xylulose-5-phosphate (DXP) to 2-C-methyl-D-erythritol 4-phosphate (MEP). This is 1-deoxy-D-xylulose 5-phosphate reductoisomerase from Bacillus subtilis (strain 168).